We begin with the raw amino-acid sequence, 127 residues long: Thioredoxin domain-containing protein 8 (127 aa).

Positions valine 2–methionine 127 constitute a Thioredoxin domain. A disulfide bridge connects residues cysteine 32 and cysteine 35.

It belongs to the thioredoxin family. In terms of tissue distribution, testis-specific. Expressed in spermatozoa, sperm tail, elongated and round spermatids.

Its subcellular location is the cytoplasm. It is found in the golgi apparatus. May be required for post-translational modifications of proteins required for acrosomal biogenesis. May act by reducing disulfide bonds within the sperm. This is Thioredoxin domain-containing protein 8 (Txndc8) from Rattus norvegicus (Rat).